Consider the following 223-residue polypeptide: MTGTPGAVATRDGEAPERSPPCSPSYDLTGKVMLLGDTGVGKTCFLIQFKDGAFLSGTFIATVGIDFRNKVVTVDGVRVKLQIWDTAGQERFRSVTHAYYRDAQALLLLYDITNKSSFDNIRAWLTEIHEYAQRDVVIMLLGNKADMSSERVIRSEDGETLAREYGVPFLETSAKTGMNVELAFLAIAKELKYRAGHQADEPSFQIRDYVESQKKRSSCCSFM.

The segment at 1-23 (MTGTPGAVATRDGEAPERSPPCS) is disordered. Residue T2 is modified to N-acetylthreonine. T38, G39, V40, G41, K42, T43, C44, and T62 together coordinate GTP. A Mg(2+)-binding site is contributed by T43. 2 short sequence motifs (switch) span residues 52 to 67 (GAFL…GIDF) and 85 to 102 (DTAG…YYRD). Residues T62 and D85 each contribute to the Mg(2+) site. Residues G88, N143, K144, D146, M147, S173, A174, and K175 each contribute to the GTP site. Residues C219 and C220 are each lipidated (S-geranylgeranyl cysteine). C220 bears the Cysteine methyl ester mark. Residues 221 to 223 (SFM) constitute a propeptide, removed in mature form.

This sequence belongs to the small GTPase superfamily. Rab family. In terms of assembly, interacts with RIMS1. Interacts (in GDP-bound form) with RPGR, RPGR functions as guanine exchange factor (GEF). Mg(2+) serves as cofactor.

Its subcellular location is the cytoplasmic vesicle. The protein resides in the cell projection. It is found in the cilium. The catalysed reaction is GTP + H2O = GDP + phosphate + H(+). Its activity is regulated as follows. Regulated by guanine nucleotide exchange factors (GEFs) including RPGR which promote the exchange of bound GDP for free GTP. Regulated by GTPase activating proteins (GAPs) which increase the GTP hydrolysis activity. Inhibited by GDP dissociation inhibitors (GDIs). The small GTPases Rab are key regulators of intracellular membrane trafficking, from the formation of transport vesicles to their fusion with membranes. Rabs cycle between an inactive GDP-bound form and an active GTP-bound form that is able to recruit to membranes different sets of downstream effectors directly responsible for vesicle formation, movement, tethering and fusion. Acts as an organizer for autophagosome biogenesis in a GTP-dependent manner. Involved in retinal homeostasis by autophagy regulation. The protein is Ras-related protein Rab-37 of Homo sapiens (Human).